The primary structure comprises 353 residues: Mitochondrial glutathione transporter SLC25A40 (353 aa).

3 Solcar repeats span residues 14 to 132 (ITPF…LFAL), 140 to 224 (RSDL…GKWW), and 234 to 328 (PTVA…GKAF). Helical transmembrane passes span 20–40 (MMAS…LDVV), 104–124 (LWSG…IYFT), 143–163 (LAPL…ISPL), 200–221 (WGPT…YEKG), 237–257 (AITF…TLPF), and 299–319 (GLFA…AIMI).

It belongs to the mitochondrial carrier (TC 2.A.29) family.

The protein resides in the mitochondrion inner membrane. It carries out the reaction glutathione(in) = glutathione(out). Its function is as follows. Probable mitochondrial transporter required for glutathione import into mitochondria. Glutathione, which plays key roles in oxidative metabolism, is produced exclusively in the cytosol and is imported in many organelles. Mitochondrial glutathione is required for the activity and stability of proteins containing iron-sulfur clusters. The polypeptide is Mitochondrial glutathione transporter SLC25A40 (Danio rerio (Zebrafish)).